The following is an 800-amino-acid chain: Transcription initiation factor TFIID subunit 5 (800 aa).

Residues 1–74 (MAALAEEQTE…KPTVAVSAAA (74 aa)) form a disordered region. The span at 30-50 (DGAGEGSGGTTNNGPNGGGGN) shows a compositional bias: gly residues. The LisH domain occupies 92 to 124 (HDRQTLLAVLQFLRQSKLREAEEALRREAGLLE). Residues 153 to 189 (ASAPGPAAPDPPGTGASGATVVSGSASGPAAPGKVGS) are disordered. The segment covering 165–189 (GTGASGATVVSGSASGPAAPGKVGS) has biased composition (low complexity). Residues 194–340 (DQPDVSAVLS…NIVQEHLYID (147 aa)) form an NTD2; involved in homo-dimerization; also involved in TFIID-TFIIF contacts in the RNA Pol II pre-initiation complex (PIC) region. Residues 384–395 (VPLDDEDEEGEN) show a composition bias toward acidic residues. The tract at residues 384-438 (VPLDDEDEEGENEEGKPKKKKPKKDSIGSKSKKQDPNAPPQNRIPLPELKDSDKL) is disordered. A compositionally biased stretch (basic and acidic residues) spans 407 to 418 (KDSIGSKSKKQD). 6 WD repeats span residues 468–507 (NAYQ…LRSV), 541–580 (GHSG…CLVG), 583–624 (GHNY…RIFA), 625–666 (GHLA…RIFT), 667–706 (GHKG…MVGE), and 709–748 (GHTD…EDLE).

Belongs to the WD repeat TAF5 family. Homodimer. Component of the TFIID basal transcription factor complex, composed of TATA-box-binding protein TBP, and a number of TBP-associated factors (TAFs), including TAF1, TAF2, TAF3, TAF4, TAF5, TAF6, TAF7, TAF8, TAF9, TAF10, TAF11, TAF12 and TAF13. The TFIID complex structure can be divided into 3 modules TFIID-A, TFIID-B, and TFIID-C. TAF5 forms the TFIID-A module together with TAF3 and TBP, and in TFIID-B with TAF8. Component of the TFTC-HAT complex, at least composed of TAF5L, TAF6L, TADA3L, SUPT3H/SPT3, TAF2, TAF4, TAF5, GCN5L2/GCN5, TAF10 and TRRAP. TBP is not part of the TFTC-HAT complex. Interacts strongly with the histone H4-related TAF6 and the histone H3-related TAF9, as well as a stable complex comprised of both TAF6 and TAF9. Apparently weaker interactions with TBP, TAF1, TAF11, and TAF12, but not TAF7, also have been observed. In terms of assembly, (Microbial infection) Interacts with SV40 Large T antigen.

The protein resides in the nucleus. Functionally, the TFIID basal transcription factor complex plays a major role in the initiation of RNA polymerase II (Pol II)-dependent transcription. TFIID recognizes and binds promoters with or without a TATA box via its subunit TBP, a TATA-box-binding protein, and promotes assembly of the pre-initiation complex (PIC). The TFIID complex consists of TBP and TBP-associated factors (TAFs), including TAF1, TAF2, TAF3, TAF4, TAF5, TAF6, TAF7, TAF8, TAF9, TAF10, TAF11, TAF12 and TAF13. The TFIID complex structure can be divided into 3 modules TFIID-A, TFIID-B, and TFIID-C. TAF5 is involved in two modules of TFIID, in TFIID-A together with TAF3 and TBP, and in TFIID-B with TAF8. Involved in contacts between TFIID and TFIIF in the PIC. The polypeptide is Transcription initiation factor TFIID subunit 5 (TAF5) (Homo sapiens (Human)).